A 317-amino-acid chain; its full sequence is Beta-ketoacyl-[acyl-carrier-protein] synthase III (317 aa).

Catalysis depends on residues Cys112 and His244. An ACP-binding region spans residues 245–249 (QANLR). Asn274 is an active-site residue.

Belongs to the thiolase-like superfamily. FabH family. As to quaternary structure, homodimer.

It is found in the cytoplasm. It carries out the reaction malonyl-[ACP] + acetyl-CoA + H(+) = 3-oxobutanoyl-[ACP] + CO2 + CoA. Its pathway is lipid metabolism; fatty acid biosynthesis. Catalyzes the condensation reaction of fatty acid synthesis by the addition to an acyl acceptor of two carbons from malonyl-ACP. Catalyzes the first condensation reaction which initiates fatty acid synthesis and may therefore play a role in governing the total rate of fatty acid production. Possesses both acetoacetyl-ACP synthase and acetyl transacylase activities. Its substrate specificity determines the biosynthesis of branched-chain and/or straight-chain of fatty acids. This is Beta-ketoacyl-[acyl-carrier-protein] synthase III from Sodalis glossinidius (strain morsitans).